The sequence spans 473 residues: Aspartyl/glutamyl-tRNA(Asn/Gln) amidotransferase subunit B (473 aa).

Belongs to the GatB/GatE family. GatB subfamily. In terms of assembly, heterotrimer of A, B and C subunits.

It catalyses the reaction L-glutamyl-tRNA(Gln) + L-glutamine + ATP + H2O = L-glutaminyl-tRNA(Gln) + L-glutamate + ADP + phosphate + H(+). The enzyme catalyses L-aspartyl-tRNA(Asn) + L-glutamine + ATP + H2O = L-asparaginyl-tRNA(Asn) + L-glutamate + ADP + phosphate + 2 H(+). Functionally, allows the formation of correctly charged Asn-tRNA(Asn) or Gln-tRNA(Gln) through the transamidation of misacylated Asp-tRNA(Asn) or Glu-tRNA(Gln) in organisms which lack either or both of asparaginyl-tRNA or glutaminyl-tRNA synthetases. The reaction takes place in the presence of glutamine and ATP through an activated phospho-Asp-tRNA(Asn) or phospho-Glu-tRNA(Gln). The sequence is that of Aspartyl/glutamyl-tRNA(Asn/Gln) amidotransferase subunit B from Francisella tularensis subsp. tularensis (strain FSC 198).